The chain runs to 192 residues: Ion-translocating oxidoreductase complex subunit B (192 aa).

A hydrophobic region spans residues 1–26 (MNAIWIAVAAVSLLGLAFGAILGYAS). Residues 32 to 91 (EDDPVVEKIDEILPQSQCGQCGYPGCRPYAEAISCNGEKINRCAPGGEAVMLKIAELLNV) enclose the 4Fe-4S domain. 12 residues coordinate [4Fe-4S] cluster: C49, C52, C57, C74, C117, C120, C123, C127, C147, C150, C153, and C157. 4Fe-4S ferredoxin-type domains are found at residues 108–137 (MVAVIDENNCIGCTKCIQACPVDAIVGATR) and 138–167 (AMHTVMSDLCTGCNLCVDPCPTHCISLQPV).

Belongs to the 4Fe4S bacterial-type ferredoxin family. RnfB subfamily. In terms of assembly, the complex is composed of six subunits: RsxA, RsxB, RsxC, RsxD, RsxE and RsxG. It depends on [4Fe-4S] cluster as a cofactor.

Its subcellular location is the cell inner membrane. Functionally, part of a membrane-bound complex that couples electron transfer with translocation of ions across the membrane. Required to maintain the reduced state of SoxR. The sequence is that of Ion-translocating oxidoreductase complex subunit B from Escherichia coli O8 (strain IAI1).